We begin with the raw amino-acid sequence, 637 residues long: Biosynthetic arginine decarboxylase (637 aa).

Residue lysine 101 is modified to N6-(pyridoxal phosphate)lysine. 286-296 is a binding site for substrate; sequence FDVGGGLAVDY.

Belongs to the Orn/Lys/Arg decarboxylase class-II family. SpeA subfamily. Requires Mg(2+) as cofactor. Pyridoxal 5'-phosphate serves as cofactor.

It catalyses the reaction L-arginine + H(+) = agmatine + CO2. The protein operates within amine and polyamine biosynthesis; agmatine biosynthesis; agmatine from L-arginine: step 1/1. In terms of biological role, catalyzes the biosynthesis of agmatine from arginine. The sequence is that of Biosynthetic arginine decarboxylase from Shewanella sp. (strain ANA-3).